The chain runs to 176 residues: ATP-dependent protease subunit HslV (176 aa).

Residue Thr5 is part of the active site. 3 residues coordinate Na(+): Ala161, Cys164, and Thr167.

Belongs to the peptidase T1B family. HslV subfamily. In terms of assembly, a double ring-shaped homohexamer of HslV is capped on each side by a ring-shaped HslU homohexamer. The assembly of the HslU/HslV complex is dependent on binding of ATP.

It localises to the cytoplasm. The enzyme catalyses ATP-dependent cleavage of peptide bonds with broad specificity.. Its activity is regulated as follows. Allosterically activated by HslU binding. Its function is as follows. Protease subunit of a proteasome-like degradation complex believed to be a general protein degrading machinery. The sequence is that of ATP-dependent protease subunit HslV from Caldicellulosiruptor bescii (strain ATCC BAA-1888 / DSM 6725 / KCTC 15123 / Z-1320) (Anaerocellum thermophilum).